A 594-amino-acid chain; its full sequence is Glutamate decarboxylase 1 (594 aa).

Residues 1–13 (MASSTPSSSATSS) are compositionally biased toward low complexity. The segment at 1-25 (MASSTPSSSATSSNAGPDPNTTNLR) is disordered. Serine 78 is subject to Phosphoserine. 190 to 192 (QLS) contacts 4-aminobutanoate. Residue lysine 405 is modified to N6-(pyridoxal phosphate)lysine. Position 567 (arginine 567) interacts with 4-aminobutanoate.

This sequence belongs to the group II decarboxylase family. Homodimer. Pyridoxal 5'-phosphate is required as a cofactor.

The catalysed reaction is L-glutamate + H(+) = 4-aminobutanoate + CO2. Its function is as follows. Catalyzes the synthesis of the inhibitory neurotransmitter gamma-aminobutyric acid (GABA) with pyridoxal 5'-phosphate as cofactor. In Sus scrofa (Pig), this protein is Glutamate decarboxylase 1 (GAD1).